The following is a 334-amino-acid chain: Cathepsin L2 (334 aa).

Residues 1–17 (MNLSLVLAAFCLGIASA) form the signal peptide. Positions 18 to 113 (VPKFDQNLDT…KVFREPLFLD (96 aa)) are cleaved as a propeptide — activation peptide. Disulfide bonds link Cys135–Cys178 and Cys169–Cys211. Cys138 is an active-site residue. Asn221 is a glycosylation site (N-linked (GlcNAc...) asparagine). Cys270 and Cys323 are joined by a disulfide. The active site involves His277. N-linked (GlcNAc...) asparagine glycosylation is present at Asn292. The active site involves Asn301.

It belongs to the peptidase C1 family. Predominantly expressed in the thymus and testis. Also expressed in corneal epithelium, and to a lesser extent in conjunctival epithelium and skin.

It is found in the lysosome. The catalysed reaction is The recombinant enzyme hydrolyzes proteins (serum albumin, collagen) and synthetic substrates (Z-Phe-Arg-NHMec &gt; Z-Leu-Arg-NHMec &gt; Z-Val-Arg-NHMec).. Inhibited by CST6. Its function is as follows. Cysteine protease. May have an important role in corneal physiology. The protein is Cathepsin L2 (CTSV) of Homo sapiens (Human).